Reading from the N-terminus, the 1208-residue chain is Transient receptor potential cation channel subfamily M member 4 (1208 aa).

The Cytoplasmic portion of the chain corresponds to 1 to 776 (MVGQEKEQSW…SYFWGAPVTA (776 aa)). Positions 172, 215, and 226 each coordinate ATP. Positions 271, 393, 396, and 397 each coordinate Ca(2+). ATP contacts are provided by R422 and G449. Phosphoserine is present on residues S527 and S538. The chain crosses the membrane as a helical span at residues 777-797 (FLGNVVSYLLFLLLFAHVLLV). Topologically, residues 798–808 (DFQPTKPGVFE) are extracellular. A helical membrane pass occupies residues 809–829 (LLLYFWAFTLLCEELRQGLGG). Positions 822 and 825 each coordinate Ca(2+). Topologically, residues 830–857 (GWGTLANGGPGPGKAPLRHRLHLYLLDT) are cytoplasmic. The chain crosses the membrane as a helical span at residues 858–878 (WNQCDLLALTCFLLGVGCRLT). Ca(2+) contacts are provided by N859 and D862. Residues 879–880 (PG) lie on the Extracellular side of the membrane. Residues 881–904 (LFDLGRTVLCLDFMIFTLRLLHIF) form a helical membrane-spanning segment. Residues 905 to 924 (TVNKQLGPKIVIVSKMMKDV) are Cytoplasmic-facing. The helical transmembrane segment at 925–945 (FFFLFFLCVWLVAYGVATEGI) threads the bilayer. Residues 946-957 (LRPQDRSLPSIL) lie on the Extracellular side of the membrane. Positions 958–978 (RRVFYRPYLQIFGQIPQEEMD) form an intramembrane region, pore-forming. The short motif at 969–971 (FGQ) is the Selectivity filter element. The Extracellular portion of the chain corresponds to 979–1013 (VALMNPSNCSAERGSWAHPEGPVAGSCVSQYANWL). C987 and C1005 are oxidised to a cystine. The chain crosses the membrane as a helical span at residues 1014–1034 (VVLLLIVFLLVANILLLNLLI). Over 1035–1208 (AMFSYTFNKV…PPPSPTGSKD (174 aa)) the chain is Cytoplasmic. The tract at residues 1070–1170 (APPLIIISHL…EYDRRLRGLE (101 aa)) is calmodulin-binding. Residues 1128 to 1180 (LAQARDKRDSDSERLKRTSQKVDTALKQLGQIREYDRRLRGLEREVQHCSRVL) adopt a coiled-coil conformation. The interval 1130 to 1135 (QARDKR) is mediates modulation by decavanadate and PIP2-binding. A phosphoserine; by PKC mark is found at S1139 and S1146. The interval 1189 to 1208 (HSALLPPGGPPPPSPTGSKD) is disordered. Over residues 1195–1208 (PGGPPPPSPTGSKD) the composition is skewed to pro residues.

Belongs to the transient receptor (TC 1.A.4) family. LTrpC subfamily. TRPM4 sub-subfamily. As to quaternary structure, homotetramer. In terms of processing, phosphorylation by PKC leads to increase the sensitivity to Ca(2+). Sumoylated. Desumoylated by SENP1. In terms of tissue distribution, isoform 1 is highly expressed in the testis with a moderate expression in the brain, spleen and thymus. Isoform 2 is only expressed in the brain and spleen.

The protein resides in the cell membrane. It is found in the endoplasmic reticulum. It localises to the golgi apparatus. It carries out the reaction Na(+)(in) = Na(+)(out). It catalyses the reaction K(+)(in) = K(+)(out). With respect to regulation, gating is voltage-dependent and repressed by decavanadate. Calmodulin-binding confers the Ca(2+) sensitivity. ATP is able to restore Ca(2+) sensitivity after desensitization. Phosphatidylinositol 4,5-bisphosphate (PIP2)-binding strongly enhances activity, by increasing the channel's Ca(2+) sensitivity and shifting its voltage dependence of activation towards negative potentials. Activity is also enhanced by 3,5-bis(trifluoromethyl)pyrazole derivative (BTP2). Exhibits pronounced temperature sensitivity, with activities strongly intensifying near physiological temperatures. TRPM4 can adopt distinct conformations at different temperatures, markedly influencing where and how ligands interact with them. Functionally, calcium-activated selective cation channel that mediates membrane depolarization. While it is activated by increase in intracellular Ca(2+), it is impermeable to it. Mediates transport of monovalent cations (Na(+) &gt; K(+) &gt; Cs(+) &gt; Li(+)), leading to depolarize the membrane. It thereby plays a central role in cadiomyocytes, neurons from entorhinal cortex, dorsal root and vomeronasal neurons, endocrine pancreas cells, kidney epithelial cells, cochlea hair cells etc. Participates in T-cell activation by modulating Ca(2+) oscillations after T lymphocyte activation, which is required for NFAT-dependent IL2 production. Involved in myogenic constriction of cerebral arteries. Controls insulin secretion in pancreatic beta-cells. May also be involved in pacemaking or could cause irregular electrical activity under conditions of Ca(2+) overload. Affects T-helper 1 (Th1) and T-helper 2 (Th2) cell motility and cytokine production through differential regulation of calcium signaling and NFATC1 localization. Enhances cell proliferation through up-regulation of the beta-catenin signaling pathway. Plays a role in keratinocyte differentiation. Its function is as follows. Lacks channel activity. This Rattus norvegicus (Rat) protein is Transient receptor potential cation channel subfamily M member 4 (Trpm4).